Here is a 1354-residue protein sequence, read N- to C-terminus: Rho-associated protein kinase 1 (1354 aa).

Ser-2 carries the N-acetylserine modification. Positions Tyr-76–Phe-338 constitute a Protein kinase domain. Residues Ile-82–Val-90 and Lys-105 contribute to the ATP site. Residue Asp-198 is the Proton acceptor of the active site. The AGC-kinase C-terminal domain occupies Asp-341–Ala-409. The interval Phe-368–Arg-727 is interaction with FHOD1. Residues Lys-422–Lys-692 are a coiled coil. Positions Ser-479–Thr-556 constitute an REM-1 domain. The residue at position 647 (Lys-647) is an N6-acetyllysine. Residues Glu-707–Ser-946 are SHROOM3 binding. Residues Thr-949–Phe-1015 form the RhoBD domain. The tract at residues Leu-998 to Met-1010 is RHOA binding. The stretch at Asn-1011–Ser-1102 forms a coiled coil. Ser-1105 and Ser-1108 each carry phosphoserine. An auto-inhibitory region spans residues Asn-1115–Ser-1354. The PH domain occupies Glu-1118–Pro-1317. A Phorbol-ester/DAG-type zinc finger spans residues Gly-1228 to Cys-1281. Residues Pro-1320–Ser-1354 are disordered. A Phosphoserine modification is found at Ser-1328. A compositionally biased stretch (polar residues) spans Arg-1330 to Ser-1354.

Belongs to the protein kinase superfamily. AGC Ser/Thr protein kinase family. Homodimer. Interacts with RHOB, RHOC, MYLC2B and PTEN. Interacts with ITGB1BP1 (via N-terminus and PTB domain). Interacts with RHOA (activated by GTP), CHORDC1, DAPK3, GEM, JIP3, RHOE, PPP1R12A, PFN1, LIMK1, LIMK2 and TSG101. Interacts with FHOD1 in a Src-dependent manner. Interacts with SHROOM3. Mg(2+) is required as a cofactor. Post-translationally, autophosphorylated on serine and threonine residues. In terms of processing, cleaved by caspase-3 during apoptosis. This leads to constitutive activation of the kinase and membrane blebbing. In terms of tissue distribution, detected in blood platelets.

The protein resides in the cytoplasm. Its subcellular location is the cytoskeleton. The protein localises to the microtubule organizing center. It localises to the centrosome. It is found in the centriole. The protein resides in the golgi apparatus membrane. Its subcellular location is the cell projection. The protein localises to the bleb. It localises to the cell membrane. It is found in the lamellipodium. The protein resides in the ruffle. The enzyme catalyses L-seryl-[protein] + ATP = O-phospho-L-seryl-[protein] + ADP + H(+). It catalyses the reaction L-threonyl-[protein] + ATP = O-phospho-L-threonyl-[protein] + ADP + H(+). Activated by RHOA binding. Inhibited by Y-27632. In terms of biological role, protein kinase which is a key regulator of the actin cytoskeleton and cell polarity. Involved in regulation of smooth muscle contraction, actin cytoskeleton organization, stress fiber and focal adhesion formation, neurite retraction, cell adhesion and motility via phosphorylation of DAPK3, GFAP, LIMK1, LIMK2, MYL9/MLC2, TPPP, PFN1 and PPP1R12A. Phosphorylates FHOD1 and acts synergistically with it to promote SRC-dependent non-apoptotic plasma membrane blebbing. Phosphorylates JIP3 and regulates the recruitment of JNK to JIP3 upon UVB-induced stress. Acts as a suppressor of inflammatory cell migration by regulating PTEN phosphorylation and stability. Acts as a negative regulator of VEGF-induced angiogenic endothelial cell activation. Required for centrosome positioning and centrosome-dependent exit from mitosis. Plays a role in terminal erythroid differentiation. Inhibits podocyte motility via regulation of actin cytoskeletal dynamics and phosphorylation of CFL1. Promotes keratinocyte terminal differentiation. Involved in osteoblast compaction through the fibronectin fibrillogenesis cell-mediated matrix assembly process, essential for osteoblast mineralization. May regulate closure of the eyelids and ventral body wall by inducing the assembly of actomyosin bundles. The polypeptide is Rho-associated protein kinase 1 (ROCK1) (Homo sapiens (Human)).